We begin with the raw amino-acid sequence, 570 residues long: Protein B602L (570 aa).

Repeat copies occupy residues 161 to 164, 165 to 168, 169 to 172, 173 to 176, 177 to 180, 181 to 184, 185 to 188, 189 to 192, 193 to 196, 197 to 200, 201 to 204, 205 to 208, 209 to 212, 213 to 216, 217 to 220, 221 to 224, 225 to 228, 229 to 232, 233 to 236, and 237 to 240. Positions 161–240 are 20 X 4 AA tandem repeats of [CNS]-[ATV]-[DNS]-T; it reads CADTNASTSA…STCASTCANT (80 aa).

Belongs to the asfivirus B602L family.

It localises to the host cytoplasm. Plays an essential role in the assembly of the icosahedral capsid of the virus. Allows the assembly of 3 molecules of hexon protein p72 and formation of a thermostable trimer. This chain is Protein B602L, found in African swine fever virus (isolate Tick/South Africa/Pretoriuskop Pr4/1996) (ASFV).